The following is a 152-amino-acid chain: D-aminoacyl-tRNA deacylase (152 aa).

The Gly-cisPro motif, important for rejection of L-amino acids signature appears at 138–139 (GP).

The protein belongs to the DTD family. Homodimer.

It is found in the cytoplasm. It carries out the reaction glycyl-tRNA(Ala) + H2O = tRNA(Ala) + glycine + H(+). The enzyme catalyses a D-aminoacyl-tRNA + H2O = a tRNA + a D-alpha-amino acid + H(+). An aminoacyl-tRNA editing enzyme that deacylates mischarged D-aminoacyl-tRNAs. Also deacylates mischarged glycyl-tRNA(Ala), protecting cells against glycine mischarging by AlaRS. Acts via tRNA-based rather than protein-based catalysis; rejects L-amino acids rather than detecting D-amino acids in the active site. By recycling D-aminoacyl-tRNA to D-amino acids and free tRNA molecules, this enzyme counteracts the toxicity associated with the formation of D-aminoacyl-tRNA entities in vivo and helps enforce protein L-homochirality. The polypeptide is D-aminoacyl-tRNA deacylase (Chloroherpeton thalassium (strain ATCC 35110 / GB-78)).